The sequence spans 437 residues: Transcription factor AP-2-alpha (437 aa).

A Glycyl lysine isopeptide (Lys-Gly) (interchain with G-Cter in SUMO); alternate cross-link involves residue lysine 10. Lysine 10 is covalently cross-linked (Glycyl lysine isopeptide (Lys-Gly) (interchain with G-Cter in SUMO2); alternate). The tract at residues 14–107 (CEDRHDGTSN…GQRQSQESGL (94 aa)) is disordered. The short motif at 57–62 (YFPPPY) is the PPxY motif element. 2 stretches are compositionally biased toward low complexity: residues 65–74 (IYPQSQDPYS) and 88–101 (QPQPQHPGWPGQRQ). Glycyl lysine isopeptide (Lys-Gly) (interchain with G-Cter in SUMO2) cross-links involve residues lysine 177 and lysine 184. At serine 239 the chain carries Phosphoserine; by PKA. An H-S-H (helix-span-helix), dimerization region spans residues 280 to 410 (RRKAANVTLL…YLTEALKAMD (131 aa)). The segment covering 414–427 (LSNNPNSHTDNSAK) has biased composition (polar residues). The disordered stretch occupies residues 414 to 437 (LSNNPNSHTDNSAKSSDKEEKHRK). Residues 428–437 (SSDKEEKHRK) are compositionally biased toward basic and acidic residues.

This sequence belongs to the AP-2 family. As to quaternary structure, binds DNA as a dimer. Can form homodimers or heterodimers with other AP-2 family members. Interacts with WWOX. Interacts with UBE2I. Interacts with RALBP1 in a complex also containing EPN1 and NUMB during interphase and mitosis. Interacts with CITED4. Interacts with KCTD1; this interaction represses transcription activation. Interacts (via C-terminus) with CITED2 (via C-terminus); the interaction stimulates TFAP2A-transcriptional activation. Interacts (via N-terminus) with EP300 (via N-terminus); the interaction requires CITED2. Interacts with KCTD15; this interaction inhibits TFAP2A transcriptional activation. Post-translationally, sumoylated on Lys-10; which inhibits transcriptional activity.

It is found in the nucleus. Functionally, sequence-specific DNA-binding protein that interacts with inducible viral and cellular enhancer elements to regulate transcription of selected genes. AP-2 factors bind to the consensus sequence 5'-GCCNNNGGC-3' and activate genes involved in a large spectrum of important biological functions including proper eye, face, body wall, limb and neural tube development. They also suppress a number of genes including MCAM/MUC18, C/EBP alpha and MYC. AP-2-alpha is the only AP-2 protein required for early morphogenesis of the lens vesicle. Together with the CITED2 coactivator, stimulates the PITX2 P1 promoter transcription activation. Associates with chromatin to the PITX2 P1 promoter region. This is Transcription factor AP-2-alpha (Tfap2a) from Mus musculus (Mouse).